The sequence spans 227 residues: Transmembrane emp24 domain-containing protein 1 (227 aa).

The N-terminal stretch at 1-23 (MMAAGTALGLALWLLLPPVGVGG) is a signal peptide. At 24-194 (AGPPPIQDGE…LQEGNLERVN (171 aa)) the chain is on the extracellular side. The GOLD domain maps to 43–125 (KQCFYQSAPA…EKLVFFELIF (83 aa)). Residues 145 to 170 (EILEVKMEDIKESIETMRIRLERSIQ) adopt a coiled-coil conformation. The chain crosses the membrane as a helical span at residues 195–215 (FWSAVNVAVLLLVAVLQVCTL). Topologically, residues 216 to 227 (KRFFQDKRPVPM) are cytoplasmic. A COPII vesicle coat-binding motif is present at residues 218–219 (FF). A COPI vesicle coat-binding motif is present at residues 218 to 227 (FFQDKRPVPM).

This sequence belongs to the EMP24/GP25L family. As to quaternary structure, homodimer in endoplasmic reticulum, endoplasmic reticulum-Golgi intermediate compartment and cis-Golgi network. Interacts with IL1RL1. Interacts with RNF26; this interaction is important to modulate innate immune signaling through the cGAS-STING pathway.

It is found in the cell membrane. Its subcellular location is the endoplasmic reticulum membrane. It localises to the golgi apparatus. The protein resides in the cis-Golgi network membrane. The protein localises to the endoplasmic reticulum-Golgi intermediate compartment membrane. Its function is as follows. Potential role in vesicular protein trafficking, mainly in the early secretory pathway. May act as a cargo receptor at the lumenal side for incorporation of secretory cargo molecules into transport vesicles and may be involved in vesicle coat formation at the cytoplasmic side. Plays a positive role in IL-33-mediated IL-8 and IL-6 production by interacting with interleukin-33 receptor IL1RL1. Plays also a role in the modulation of innate immune signaling through the cGAS-STING pathway by interacting with RNF26. In Bos taurus (Bovine), this protein is Transmembrane emp24 domain-containing protein 1 (TMED1).